The primary structure comprises 431 residues: CCA tRNA nucleotidyltransferase 1, mitochondrial (431 aa).

The transit peptide at 1 to 31 (MWAKLFLRPSFVNRVHLTWSCRALLTMQLKT) directs the protein to the mitochondrion. ATP contacts are provided by Gly61 and Arg64. CTP-binding residues include Gly61 and Arg64. The Mg(2+) site is built by Asp74 and Asp76. ATP is bound by residues Arg148, Asp191, Arg194, Arg197, and Arg200. Residues Arg148, Asp191, Arg194, Arg197, and Arg200 each coordinate CTP.

This sequence belongs to the tRNA nucleotidyltransferase/poly(A) polymerase family. As to quaternary structure, monomer, and homodimer. The cofactor is Mg(2+). As to expression, expressed ubiquitously during early embryogenesis.

The protein localises to the mitochondrion. The protein resides in the cytoplasm. Its subcellular location is the nucleus. The catalysed reaction is a tRNA precursor + 2 CTP + ATP = a tRNA with a 3' CCA end + 3 diphosphate. The enzyme catalyses a tRNA with a 3' CCA end + 2 CTP + ATP = a tRNA with a 3' CCACCA end + 3 diphosphate. Functionally, nucleotidyltransferase that catalyzes the addition and repair of the essential 3'-terminal CCA sequence in tRNAs, which is necessary for the attachment of amino acids to the 3' terminus of tRNA molecules, using CTP and ATP as substrates. tRNA 3'-terminal CCA addition is required both for tRNA processing and repair. Promotes tRNA repair and recycling downstream of the ribosome-associated quality control (RQC) pathway by mediating addition of the tRNA 3'-terminal CCA following cleavage by ankzf1 and repair by elac1. Also involved in tRNA surveillance by mediating tandem CCA addition to generate a CCACCA at the 3' terminus of unstable tRNAs and tRNA-like transcripts. While stable tRNAs receive only 3'-terminal CCA, unstable tRNAs beginning with GG are marked with CCACCA and rapidly degraded. The structural flexibility of RNA controls the choice between CCA versus CCACCA addition: following the first CCA addition cycle, nucleotide-binding to the active site triggers a clockwise screw motion, producing torque on the RNA. This ejects stable RNAs, whereas unstable RNAs are refolded while bound to the enzyme and subjected to a second CCA catalytic cycle. This chain is CCA tRNA nucleotidyltransferase 1, mitochondrial, found in Danio rerio (Zebrafish).